The following is a 145-amino-acid chain: Ribosome maturation factor RimP (145 aa).

It belongs to the RimP family.

The protein localises to the cytoplasm. Required for maturation of 30S ribosomal subunits. The sequence is that of Ribosome maturation factor RimP from Borreliella afzelii (strain PKo) (Borrelia afzelii).